A 285-amino-acid polypeptide reads, in one-letter code: Probable endonuclease 4 (285 aa).

Positions 69, 109, 145, 179, 182, 216, 229, 231, and 261 each coordinate Zn(2+).

Belongs to the AP endonuclease 2 family. Zn(2+) is required as a cofactor.

It carries out the reaction Endonucleolytic cleavage to 5'-phosphooligonucleotide end-products.. In terms of biological role, endonuclease IV plays a role in DNA repair. It cleaves phosphodiester bonds at apurinic or apyrimidinic (AP) sites, generating a 3'-hydroxyl group and a 5'-terminal sugar phosphate. This chain is Probable endonuclease 4, found in Salmonella agona (strain SL483).